A 313-amino-acid polypeptide reads, in one-letter code: 4-diphosphocytidyl-2-C-methyl-D-erythritol kinase (313 aa).

K11 is an active-site residue. 99 to 109 (PVAAGLAGGST) lines the ATP pocket. Residue D141 is part of the active site.

The protein belongs to the GHMP kinase family. IspE subfamily.

It carries out the reaction 4-CDP-2-C-methyl-D-erythritol + ATP = 4-CDP-2-C-methyl-D-erythritol 2-phosphate + ADP + H(+). Its pathway is isoprenoid biosynthesis; isopentenyl diphosphate biosynthesis via DXP pathway; isopentenyl diphosphate from 1-deoxy-D-xylulose 5-phosphate: step 3/6. Functionally, catalyzes the phosphorylation of the position 2 hydroxy group of 4-diphosphocytidyl-2C-methyl-D-erythritol. This is 4-diphosphocytidyl-2-C-methyl-D-erythritol kinase from Microcystis aeruginosa (strain NIES-843 / IAM M-2473).